The following is a 326-amino-acid chain: Microtubule-associated protein RP/EB family member 2 (326 aa).

Ser-9 is subject to Phosphoserine. In terms of domain architecture, Calponin-homology (CH) spans Thr-56–Asp-158. The residue at position 166 (Tyr-166) is a Phosphotyrosine. Disordered stretches follow at residues Glu-170–Leu-239 and Tyr-297–Tyr-326. Residues Gln-186–Tyr-326 form a DCTN1-binding region. Over residues Ser-199–Ser-233 the composition is skewed to low complexity. Phosphoserine occurs at positions 218 and 235. Residues Ser-235 to Gln-305 form the EB1 C-terminal domain. An APC-binding region spans residues Glu-258–Glu-301. Residues Asp-300 to Glu-312 are compositionally biased toward acidic residues. A compositionally biased stretch (low complexity) spans Asp-317 to Tyr-326.

This sequence belongs to the MAPRE family. In terms of assembly, interacts with DCTN1. Interacts with APC (via C-terminal). Interacts with monomeric and polymerized tubulin. Interacts with SLAIN1. Interacts (via the N-terminal region) with BAG1. Interacts with ASB14. Interacts with HAX1; this interaction is essential for epidermal cell migration. In terms of processing, phosphorylated at Ser-235 by CK2 leading to enhanced cell adhesion. Phosphorylated by CDK1 and AURKB during mitosis reduces the binding affinity of MAPRE2 for microtubules. Ubiquitinated in an ASB14-dependent manner; leading to proteasomal degradation.

It is found in the cytoplasm. Its subcellular location is the cytoskeleton. Adapter protein that is involved in microtubule polymerization, and spindle function by stabilizing microtubules and anchoring them at centrosomes. Therefore, ensures mitotic progression and genome stability. Acts as a central regulator of microtubule reorganization in apico-basal epithelial differentiation. Plays a role during oocyte meiosis by regulating microtubule dynamics. Participates in neurite growth by interacting with plexin B3/PLXNB3 and microtubule reorganization during apico-basal epithelial differentiation. Also plays an essential role for cell migration and focal adhesion dynamics. Mechanistically, recruits HAX1 to microtubules in order to regulate focal adhesion dynamics. The polypeptide is Microtubule-associated protein RP/EB family member 2 (Mapre2) (Rattus norvegicus (Rat)).